Reading from the N-terminus, the 264-residue chain is MKYMITSKGDEKSDLLRLNMIAGFGEYDMEYDEIEPEIVISIGGDGTFLSAFHQYEERLDEIAFIGIHTGHLGFYADWRPAEADKLVKLLAKGEYQKVSYPLLKTTVKYGIGKKEAEYLALNESTVKSSGGPFVVDVVINDLHFERFRGDGLCMSTPSGTTAYNKSLGGALMHPSIEAMQLTEMASINNRVYRTIGSPLVFPKHHVVSLQPVNDKDFQISVDHLSILHRDVQEIRYEVSAKKVHFARFRSFPFWRRVHDSFIED.

Catalysis depends on D45, which acts as the Proton acceptor. NAD(+) contacts are provided by residues 45–46, 122–123, R148, D150, 161–166, and A185; these read DG, NE, and TAYNKS.

This sequence belongs to the NAD kinase family. A divalent metal cation is required as a cofactor.

It localises to the cytoplasm. The catalysed reaction is NAD(+) + ATP = ADP + NADP(+) + H(+). In terms of biological role, involved in the regulation of the intracellular balance of NAD and NADP, and is a key enzyme in the biosynthesis of NADP. Catalyzes specifically the phosphorylation on 2'-hydroxyl of the adenosine moiety of NAD to yield NADP. In Listeria innocua serovar 6a (strain ATCC BAA-680 / CLIP 11262), this protein is NAD kinase 1.